Consider the following 2273-residue polypeptide: Acetyl-CoA carboxylase, mitochondrial (2273 aa).

The N-terminal 104 residues, 1 to 104, are a transit peptide targeting the mitochondrion; that stretch reads KGKTITHGQS…RGNIHKHTRL (104 aa). Residues 134-635 form the Biotin carboxylation domain; it reads VISKILIANN…STGWLDDLIL (502 aa). Residues 292 to 484 enclose the ATP-grasp domain; it reads KTNFVSVPDD…LPATQLQIAM (193 aa). An ATP-binding site is contributed by 332-337; sequence GGGGKG. Arginine 459 is an active-site residue. In terms of domain architecture, Biotinyl-binding spans 763–837; sequence LEAELNPTQV…EAGDVIAKLT (75 aa). N6-biotinyllysine is present on lysine 804. Positions 1532–1867 constitute a CoA carboxyltransferase N-terminal domain; that stretch reads PYSVKDWLQP…KRDMSPPLLE (336 aa). A carboxyltransferase region spans residues 1532–2187; sequence PYSVKDWLQP…EGQVIKRLQK (656 aa). 3 residues coordinate CoA: arginine 1776, lysine 2080, and arginine 2082. Positions 1871-2187 constitute a CoA carboxyltransferase C-terminal domain; that stretch reads RWDRDVDFKP…EGQVIKRLQK (317 aa).

Requires biotin as cofactor.

The protein localises to the mitochondrion. The enzyme catalyses hydrogencarbonate + acetyl-CoA + ATP = malonyl-CoA + ADP + phosphate + H(+). It catalyses the reaction N(6)-biotinyl-L-lysyl-[protein] + hydrogencarbonate + ATP = N(6)-carboxybiotinyl-L-lysyl-[protein] + ADP + phosphate + H(+). It participates in lipid metabolism; malonyl-CoA biosynthesis; malonyl-CoA from acetyl-CoA: step 1/1. In terms of biological role, catalyzes the rate-limiting reaction in the mitochondrial fatty acid synthesis (FAS) type II pathway. Responsible for the production of the mitochondrial malonyl-CoA, used for the biosynthesis of the cofactor lipoic acid. This protein carries three functions: biotin carboxyl carrier protein, biotin carboxylase, and carboxyltransferase. The sequence is that of Acetyl-CoA carboxylase, mitochondrial (HFA1) from Saccharomyces cerevisiae (strain Lalvin EC1118 / Prise de mousse) (Baker's yeast).